A 302-amino-acid polypeptide reads, in one-letter code: Homoserine O-acetyltransferase (302 aa).

Cys142 functions as the Acyl-thioester intermediate in the catalytic mechanism. Substrate-binding residues include Lys163 and Ser192. His235 serves as the catalytic Proton acceptor. Glu237 is a catalytic residue. Position 249 (Arg249) interacts with substrate.

Belongs to the MetA family.

Its subcellular location is the cytoplasm. It catalyses the reaction L-homoserine + acetyl-CoA = O-acetyl-L-homoserine + CoA. It participates in amino-acid biosynthesis; L-methionine biosynthesis via de novo pathway; O-acetyl-L-homoserine from L-homoserine: step 1/1. Its function is as follows. Transfers an acetyl group from acetyl-CoA to L-homoserine, forming acetyl-L-homoserine. This Geobacillus sp. (strain WCH70) protein is Homoserine O-acetyltransferase.